An 819-amino-acid polypeptide reads, in one-letter code: uncharacterized protein (819 aa).

The residue at position 16 (Ser16) is a Phosphoserine. Disordered stretches follow at residues 28–83 (SNTQ…PPTV) and 96–134 (PTFT…ASKI). The zn(2)-C6 fungal-type DNA-binding region spans 36–63 (KIRFTENENDLSPERAQKEPVSIPHGRY). Composition is skewed to polar residues over residues 64–77 (TWST…SHLP) and 96–118 (PTFT…NDYI).

The protein resides in the nucleus. This is an uncharacterized protein from Schizosaccharomyces pombe (strain 972 / ATCC 24843) (Fission yeast).